The following is a 619-amino-acid chain: UPF0329 protein ECU08_2070 (619 aa).

Composition is skewed to basic and acidic residues over residues Glu-350 to Gly-359 and Gly-369 to Glu-385. The segment at Glu-350–His-425 is disordered. Residues Glu-386–Ala-396 are compositionally biased toward acidic residues.

This sequence belongs to the UPF0329 family.

This is UPF0329 protein ECU08_2070 from Encephalitozoon cuniculi (strain GB-M1) (Microsporidian parasite).